A 278-amino-acid polypeptide reads, in one-letter code: Manganese import system permease protein ScaB (278 aa).

Transmembrane regions (helical) follow at residues 18 to 38 (ALIT…FIIL), 61 to 81 (ILGI…SIII), 94 to 114 (TAIG…ISVA), 134 to 154 (LDMW…SIFF), 174 to 194 (VNFY…TAMQ), 196 to 216 (VGTI…YLYA), 222 to 242 (MILL…FIGY), and 246 to 266 (VAAG…SFFI).

Belongs to the ABC-3 integral membrane protein family. The complex is composed of two ATP-binding proteins (ScaC), two transmembrane proteins (ScaB) and a solute-binding protein (ScaA).

Its subcellular location is the cell membrane. Its function is as follows. Part of the high-affinity ABC transporter complex ScaABC involved in manganese import. Probably responsible for the translocation of the substrate across the membrane. Essential for growth under Mn(2+)-limiting conditions. The chain is Manganese import system permease protein ScaB from Streptococcus gordonii.